Reading from the N-terminus, the 382-residue chain is uncharacterized protein (382 aa).

12 helical membrane passes run 14-34, 45-65, 79-99, 102-122, 131-151, 157-177, 204-224, 235-255, 270-290, 291-311, 325-345, and 348-368; these read GLLL…LWLA, VVSS…GYVI, FIFA…SWLA, FVAG…LMCS, LLAA…LLVS, LMSV…PLLF, LGVN…GLMP, ASIG…QWPI, VQVF…AMAP, ALFI…AWAC, ALLL…AMLM, and FSDN…LLML.

The protein belongs to the major facilitator superfamily. YcaD (TC 2.A.1.26) family.

The protein resides in the cell inner membrane. This is an uncharacterized protein from Shigella dysenteriae serotype 1 (strain Sd197).